We begin with the raw amino-acid sequence, 265 residues long: Putative 2-aminoethylphosphonate transport system permease protein PhnV (265 aa).

A run of 6 helical transmembrane segments spans residues 13 to 33 (GVVA…VILM), 69 to 89 (LTIG…AALA), 104 to 124 (VFYL…LVAF), 131 to 151 (MNGT…AFTF), 185 to 205 (LPLL…LSMG), and 233 to 253 (NIAD…LLMM). An ABC transmembrane type-1 domain is found at 65-253 (LLASLTIGFC…LVAITLLLMM (189 aa)).

The protein belongs to the binding-protein-dependent transport system permease family.

The protein localises to the cell inner membrane. Functionally, probably part of the PhnSTUV complex (TC 3.A.1.11.5) involved in 2-aminoethylphosphonate import. Probably responsible for the translocation of the substrate across the membrane. This chain is Putative 2-aminoethylphosphonate transport system permease protein PhnV (phnV), found in Salmonella typhimurium (strain LT2 / SGSC1412 / ATCC 700720).